A 287-amino-acid chain; its full sequence is uncharacterized protein (287 aa).

In terms of domain architecture, THUMP spans 133-239 (CEVGKTKKMT…KNIIGISIVQ (107 aa)). Residues 257–287 (ENTKSIPNDSKLDNFDRDKNQIINDKAEHAE) are disordered. Over residues 266–287 (SKLDNFDRDKNQIINDKAEHAE) the composition is skewed to basic and acidic residues.

This is an uncharacterized protein from Schizosaccharomyces pombe (strain 972 / ATCC 24843) (Fission yeast).